Reading from the N-terminus, the 263-residue chain is Small ribosomal subunit protein eS4 (263 aa).

The region spanning 42-104 (LPLIIFLRNR…TGEHFRLVYD (63 aa)) is the S4 RNA-binding domain.

Belongs to the eukaryotic ribosomal protein eS4 family. In terms of assembly, component of the small ribosomal subunit.

It localises to the cytoplasm. In terms of biological role, component of the small ribosomal subunit. The ribosome is a large ribonucleoprotein complex responsible for the synthesis of proteins in the cell. This is Small ribosomal subunit protein eS4 (rps4) from Xenopus laevis (African clawed frog).